We begin with the raw amino-acid sequence, 279 residues long: Large ribosomal subunit protein uL2 (279 aa).

Disordered stretches follow at residues 32–53 and 225–279; these read SLLRPLPKHGGRNNAGRITTRH and AMNP…KKRK. Over residues 253-268 the composition is skewed to basic and acidic residues; the sequence is KEGRTRHINKPSDKLI. Over residues 269-279 the composition is skewed to basic residues; that stretch reads VRRRNAGKKRK.

Belongs to the universal ribosomal protein uL2 family. Part of the 50S ribosomal subunit. Forms a bridge to the 30S subunit in the 70S ribosome.

One of the primary rRNA binding proteins. Required for association of the 30S and 50S subunits to form the 70S ribosome, for tRNA binding and peptide bond formation. It has been suggested to have peptidyltransferase activity; this is somewhat controversial. Makes several contacts with the 16S rRNA in the 70S ribosome. The sequence is that of Large ribosomal subunit protein uL2 from Clavibacter michiganensis subsp. michiganensis (strain NCPPB 382).